The sequence spans 580 residues: Arginine--tRNA ligase (580 aa).

The short motif at 123–133 is the 'HIGH' region element; it reads PNIAKEMHVGH.

Belongs to the class-I aminoacyl-tRNA synthetase family. In terms of assembly, monomer.

The protein resides in the cytoplasm. It carries out the reaction tRNA(Arg) + L-arginine + ATP = L-arginyl-tRNA(Arg) + AMP + diphosphate. This Buchnera aphidicola subsp. Schizaphis graminum (strain Sg) protein is Arginine--tRNA ligase (argS).